The chain runs to 237 residues: NAD(P)H-quinone oxidoreductase subunit K (237 aa).

Positions 52, 53, 117, and 148 each coordinate [4Fe-4S] cluster.

This sequence belongs to the complex I 20 kDa subunit family. In terms of assembly, NDH-1 can be composed of about 15 different subunits; different subcomplexes with different compositions have been identified which probably have different functions. [4Fe-4S] cluster serves as cofactor.

It is found in the cellular thylakoid membrane. It catalyses the reaction a plastoquinone + NADH + (n+1) H(+)(in) = a plastoquinol + NAD(+) + n H(+)(out). The catalysed reaction is a plastoquinone + NADPH + (n+1) H(+)(in) = a plastoquinol + NADP(+) + n H(+)(out). NDH-1 shuttles electrons from an unknown electron donor, via FMN and iron-sulfur (Fe-S) centers, to quinones in the respiratory and/or the photosynthetic chain. The immediate electron acceptor for the enzyme in this species is believed to be plastoquinone. Couples the redox reaction to proton translocation, and thus conserves the redox energy in a proton gradient. Cyanobacterial NDH-1 also plays a role in inorganic carbon-concentration. This Thermosynechococcus vestitus (strain NIES-2133 / IAM M-273 / BP-1) protein is NAD(P)H-quinone oxidoreductase subunit K.